Consider the following 347-residue polypeptide: NAD-dependent alcohol dehydrogenase (347 aa).

K11 carries the post-translational modification N6-methyllysine; partial. The Zn(2+) site is built by C38, H68, E98, C101, C104, C112, and C154. N6-methyllysine; partial is present on K213.

Belongs to the zinc-containing alcohol dehydrogenase family. As to quaternary structure, homodimer and homotetramer. It depends on Zn(2+) as a cofactor.

The enzyme catalyses a primary alcohol + NAD(+) = an aldehyde + NADH + H(+). The catalysed reaction is a secondary alcohol + NAD(+) = a ketone + NADH + H(+). The protein is NAD-dependent alcohol dehydrogenase (adh) of Saccharolobus solfataricus (strain ATCC 35092 / DSM 1617 / JCM 11322 / P2) (Sulfolobus solfataricus).